A 347-amino-acid polypeptide reads, in one-letter code: S-adenosylmethionine:tRNA ribosyltransferase-isomerase (347 aa).

The protein belongs to the QueA family. As to quaternary structure, monomer.

It localises to the cytoplasm. The enzyme catalyses 7-aminomethyl-7-carbaguanosine(34) in tRNA + S-adenosyl-L-methionine = epoxyqueuosine(34) in tRNA + adenine + L-methionine + 2 H(+). It participates in tRNA modification; tRNA-queuosine biosynthesis. Transfers and isomerizes the ribose moiety from AdoMet to the 7-aminomethyl group of 7-deazaguanine (preQ1-tRNA) to give epoxyqueuosine (oQ-tRNA). The sequence is that of S-adenosylmethionine:tRNA ribosyltransferase-isomerase from Streptococcus thermophilus (strain ATCC BAA-491 / LMD-9).